Here is a 134-residue protein sequence, read N- to C-terminus: Endoribonuclease YbeY (134 aa).

Zn(2+) is bound by residues His-94, His-98, and His-104.

Belongs to the endoribonuclease YbeY family. Zn(2+) is required as a cofactor.

The protein localises to the cytoplasm. In terms of biological role, single strand-specific metallo-endoribonuclease involved in late-stage 70S ribosome quality control and in maturation of the 3' terminus of the 16S rRNA. In Campylobacter jejuni subsp. jejuni serotype O:23/36 (strain 81-176), this protein is Endoribonuclease YbeY.